The primary structure comprises 415 residues: Serine hydroxymethyltransferase (415 aa).

Residues Leu121 and 125–127 (GHL) contribute to the (6S)-5,6,7,8-tetrahydrofolate site. Position 230 is an N6-(pyridoxal phosphate)lysine (Lys230). 355–357 (SPF) contributes to the (6S)-5,6,7,8-tetrahydrofolate binding site.

Belongs to the SHMT family. As to quaternary structure, homodimer. Pyridoxal 5'-phosphate serves as cofactor.

It is found in the cytoplasm. The enzyme catalyses (6R)-5,10-methylene-5,6,7,8-tetrahydrofolate + glycine + H2O = (6S)-5,6,7,8-tetrahydrofolate + L-serine. It participates in one-carbon metabolism; tetrahydrofolate interconversion. It functions in the pathway amino-acid biosynthesis; glycine biosynthesis; glycine from L-serine: step 1/1. In terms of biological role, catalyzes the reversible interconversion of serine and glycine with tetrahydrofolate (THF) serving as the one-carbon carrier. This reaction serves as the major source of one-carbon groups required for the biosynthesis of purines, thymidylate, methionine, and other important biomolecules. Also exhibits THF-independent aldolase activity toward beta-hydroxyamino acids, producing glycine and aldehydes, via a retro-aldol mechanism. The protein is Serine hydroxymethyltransferase of Lactococcus lactis subsp. cremoris (strain SK11).